Consider the following 228-residue polypeptide: Eukaryotic translation initiation factor 4E-2 (228 aa).

A disulfide bond links cysteine 130 and cysteine 134.

Belongs to the eukaryotic initiation factor 4E family. As to quaternary structure, eIF4F is a multi-subunit complex, the composition of which varies with external and internal environmental conditions. It is composed of at least eIF4A, eIF4E and eIF4G. eIF4E is also known to interact with other partners. As to expression, highly expressed in all somatic tissues.

Functionally, recognizes and binds the 7-methylguanosine-containing mRNA cap during an early step in the initiation of protein synthesis and facilitates ribosome binding by inducing the unwinding of the mRNAs secondary structures. All 5 eIF4E proteins bind monomethyl cap structures. Only ife-1, ife-2 and ife-5 bind trimethyl cap structures which result from trans-splicing. Translation of trimethyl cap structure mRNAs may be regulated by intracellular redox state; disulfide bonds change the width and depth of the cap-binding cavity determining selectivity to mRNA caps. Probably by regulating mRNA translation in somatic cells, negatively regulates lifespan independently of daf-2/insulin and let-363/TOR pathways. Negatively regulates resistance to oxidative stress. May play a role in embryonic development. This chain is Eukaryotic translation initiation factor 4E-2 (ife-2), found in Caenorhabditis elegans.